A 1434-amino-acid chain; its full sequence is Probable ATP-dependent RNA helicase spindle-E (1434 aa).

One can recognise a Helicase ATP-binding domain in the interval 126 to 295; it reads INAINENPVV…FANESSAPPV (170 aa). 139-146 lines the ATP pocket; the sequence is GETGCGKT. Positions 241–244 match the DEAH box motif; that stretch reads DEVH. The Helicase C-terminal domain maps to 356 to 527; the sequence is TGKSYNQSLR…NCVLKAKELK (172 aa). Residues 936–999 form the Tudor domain; that stretch reads AGAITKGLML…RLMSQDLLRH (64 aa).

Belongs to the DEAD box helicase family. DEAH subfamily.

It localises to the cytoplasm. It catalyses the reaction ATP + H2O = ADP + phosphate + H(+). Functionally, probable ATP-binding RNA helicase which plays a central role during spermatogenesis and oogenesis by repressing transposable elements and preventing their mobilization, which is essential for the germline integrity. Acts via the piRNA metabolic process, which mediates the repression of transposable elements during meiosis by forming complexes composed of piRNAs and Piwi and govern the methylation and subsequent repression of transposons. Involved in the repression of LTR retrotransposon copia. Also involved in telomere regulation by repressing specialized telomeric retroelements HeT-A, TAHRE, and TART; Drosophila telomeres being maintained by transposition of specialized telomeric retroelements. Involved in telomeric trans-silencing, a repression mechanism by which a transposon or a transgene inserted in subtelomeric heterochromatin has the capacity to repress in trans in the female germline, a homologous transposon, or transgene located in euchromatin. Involved in the repression of testis-expressed Stellate genes by the homologous Su(Ste) repeats. Required for anteroposterior and dorsoventral axis formation during oogenesis. This chain is Probable ATP-dependent RNA helicase spindle-E (spn-E), found in Drosophila persimilis (Fruit fly).